The primary structure comprises 167 residues: Telethonin (167 aa).

At serine 39 the chain carries Phosphoserine. The interval 142 to 167 (PVVPVSKPGPLRRTLSRSMSQEAQRG) is disordered. A compositionally biased stretch (polar residues) spans 157–167 (SRSMSQEAQRG).

Interacts with MYOZ1, MYOZ2 and MYOZ3. Interacts with CSRP3. Interacts directly with the N-terminal Ig-like domains of 2 titin (TTN) molecules. Interacts with ANKRD2; the interaction is direct.

The protein resides in the cytoplasm. The protein localises to the myofibril. It is found in the sarcomere. Its function is as follows. Muscle assembly regulating factor. Mediates the antiparallel assembly of titin (TTN) molecules at the sarcomeric Z-disk. This chain is Telethonin (Tcap), found in Mus musculus (Mouse).